The primary structure comprises 30 residues: Cycloviolacin-O1 (30 aa).

The segment at residues 1–30 (GIPCAESCVYIPCTVTALLGCSCSNRVCYN) is a cross-link (cyclopeptide (Gly-Asn)). 3 disulfides stabilise this stretch: Cys-4–Cys-21, Cys-8–Cys-23, and Cys-13–Cys-28.

In terms of processing, this is a cyclic peptide. In terms of tissue distribution, expressed in leaves, petals, petioles and roots but not in runners (at protein level).

In terms of biological role, probably participates in a plant defense mechanism. This is Cycloviolacin-O1 from Viola odorata (Sweet violet).